The sequence spans 252 residues: Imidazole glycerol phosphate synthase subunit HisF (252 aa).

Residues aspartate 11 and aspartate 130 contribute to the active site.

The protein belongs to the HisA/HisF family. Heterodimer of HisH and HisF.

The protein resides in the cytoplasm. The enzyme catalyses 5-[(5-phospho-1-deoxy-D-ribulos-1-ylimino)methylamino]-1-(5-phospho-beta-D-ribosyl)imidazole-4-carboxamide + L-glutamine = D-erythro-1-(imidazol-4-yl)glycerol 3-phosphate + 5-amino-1-(5-phospho-beta-D-ribosyl)imidazole-4-carboxamide + L-glutamate + H(+). It functions in the pathway amino-acid biosynthesis; L-histidine biosynthesis; L-histidine from 5-phospho-alpha-D-ribose 1-diphosphate: step 5/9. In terms of biological role, IGPS catalyzes the conversion of PRFAR and glutamine to IGP, AICAR and glutamate. The HisF subunit catalyzes the cyclization activity that produces IGP and AICAR from PRFAR using the ammonia provided by the HisH subunit. The sequence is that of Imidazole glycerol phosphate synthase subunit HisF from Lacticaseibacillus paracasei (strain ATCC 334 / BCRC 17002 / CCUG 31169 / CIP 107868 / KCTC 3260 / NRRL B-441) (Lactobacillus paracasei).